Here is a 78-residue protein sequence, read N- to C-terminus: Large ribosomal subunit protein bL28 (78 aa).

The protein belongs to the bacterial ribosomal protein bL28 family.

The polypeptide is Large ribosomal subunit protein bL28 (Erwinia tasmaniensis (strain DSM 17950 / CFBP 7177 / CIP 109463 / NCPPB 4357 / Et1/99)).